We begin with the raw amino-acid sequence, 455 residues long: tRNA modification GTPase MnmE (455 aa).

Arg-26, Glu-86, and Arg-125 together coordinate (6S)-5-formyl-5,6,7,8-tetrahydrofolate. Positions 222–376 constitute a TrmE-type G domain; the sequence is GLKTAIIGRP…VEEKINQIFF (155 aa). Residue Asn-232 coordinates K(+). Residues 232–237, 251–257, and 276–279 each bind GTP; these read NVGKSS, TDIAGTT, and DTAG. Ser-236 is a Mg(2+) binding site. K(+)-binding residues include Thr-251, Ile-253, and Thr-256. Thr-257 is a binding site for Mg(2+). Lys-455 is a (6S)-5-formyl-5,6,7,8-tetrahydrofolate binding site.

This sequence belongs to the TRAFAC class TrmE-Era-EngA-EngB-Septin-like GTPase superfamily. TrmE GTPase family. As to quaternary structure, homodimer. Heterotetramer of two MnmE and two MnmG subunits. It depends on K(+) as a cofactor.

The protein localises to the cytoplasm. Exhibits a very high intrinsic GTPase hydrolysis rate. Involved in the addition of a carboxymethylaminomethyl (cmnm) group at the wobble position (U34) of certain tRNAs, forming tRNA-cmnm(5)s(2)U34. This chain is tRNA modification GTPase MnmE, found in Lactococcus lactis subsp. lactis (strain IL1403) (Streptococcus lactis).